Consider the following 404-residue polypeptide: Tryptophan synthase beta chain (404 aa).

Lys-98 is subject to N6-(pyridoxal phosphate)lysine.

This sequence belongs to the TrpB family. In terms of assembly, tetramer of two alpha and two beta chains. It depends on pyridoxal 5'-phosphate as a cofactor.

It catalyses the reaction (1S,2R)-1-C-(indol-3-yl)glycerol 3-phosphate + L-serine = D-glyceraldehyde 3-phosphate + L-tryptophan + H2O. Its pathway is amino-acid biosynthesis; L-tryptophan biosynthesis; L-tryptophan from chorismate: step 5/5. In terms of biological role, the beta subunit is responsible for the synthesis of L-tryptophan from indole and L-serine. The polypeptide is Tryptophan synthase beta chain (Acidiphilium cryptum (strain JF-5)).